We begin with the raw amino-acid sequence, 217 residues long: Protein LURP-one-related 15 (217 aa).

N-acetylmethionine is present on Met-1.

The protein belongs to the LOR family.

Its function is as follows. Might be related to the phospholipid scramblase and tubby-like superfamily of membrane tethered transcription factors. In Arabidopsis thaliana (Mouse-ear cress), this protein is Protein LURP-one-related 15.